The chain runs to 140 residues: Protein E6 (140 aa).

2 zinc fingers span residues 27 to 63 and 100 to 136; these read CIFC…CSEC and CICC…CRNC.

Belongs to the papillomaviridae E6 protein family. As to quaternary structure, forms homodimers. Interacts with ubiquitin-protein ligase UBE3A/E6-AP; this interaction stimulates UBE3A ubiquitin activity. Interacts with host BAK1.

It is found in the host cytoplasm. Its subcellular location is the host nucleus. Functionally, plays a major role in the induction and maintenance of cellular transformation. E6 associates with host UBE3A/E6-AP ubiquitin-protein ligase and modulates its activity. Protects host keratinocytes from apoptosis by mediating the degradation of host BAK1. May also inhibit host immune response. In Human papillomavirus 65, this protein is Protein E6.